A 3033-amino-acid polypeptide reads, in one-letter code: Genome polyprotein (3033 aa).

Position 2 is an N-acetylserine; by host (S2). The tract at residues 2-23 (STNPKPQRKTKRNTNRRPQDVK) is interaction with STAT1. The segment at 2 to 58 (STNPKPQRKTKRNTNRRPQDVKFPGGGQIVGGVYLLPRRGPRLGVRATRKTSERSQP) is interaction with EIF2AK2/PKR. An interaction with DDX3X region spans residues 2-59 (STNPKPQRKTKRNTNRRPQDVKFPGGGQIVGGVYLLPRRGPRLGVRATRKTSERSQPR). Positions 2–75 (STNPKPQRKT…PKDRRSTGKS (74 aa)) are disordered. Residues 2–168 (STNPKPQRKT…EDGVNFATGN (167 aa)) lie on the Cytoplasmic side of the membrane. 2 short sequence motifs (nuclear localization signal) span residues 5–13 (PKPQRKTKR) and 38–43 (PRRGPR). A compositionally biased stretch (basic residues) spans 7-16 (PQRKTKRNTN). Low complexity predominate over residues 32–47 (GGVYLLPRRGPRLGVR). Position 53 is a phosphoserine; by host (S53). 2 consecutive short sequence motifs (nuclear localization signal) follow at residues 58-64 (PRGRRQP) and 66-71 (PKDRRS). Phosphoserine; by host is present on S99. An important for endoplasmic reticulum and mitochondrial localization region spans residues 112-152 (PRHRSRNVGKVIDTLTCGFADLMGYIPVVGAPLGGVARALA). S116 is subject to Phosphoserine; by host PKA. The interval 122 to 173 (VIDTLTCGFADLMGYIPVVGAPLGGVARALAHGVRVLEDGVNFATGNLPGCS) is interaction with APOA2. The interval 164 to 167 (FATG) is important for lipid droplets localization. The helical transmembrane segment at 169-189 (LPGCSFSIFLLALLSCITTPV) threads the bilayer. Residues 178 to 191 (LLALLSCITTPVSA) constitute a propeptide, ER anchor for the core protein, removed in mature form by host signal peptidase. Over 190-358 (SAAEVKNIST…GGAHWGVMFG (169 aa)) the chain is Lumenal. N196, N209, and N234 each carry an N-linked (GlcNAc...) asparagine; by host glycan. Residues 265–296 (VVMSATLCSALYVGDLCGGVMLAAQMFIVSPQ) form an important for fusion region. N-linked (GlcNAc...) asparagine; by host glycosylation occurs at N305. The helical transmembrane segment at 359–379 (LAYFSMQGAWAKVVVILLLAA) threads the bilayer. The Lumenal portion of the chain corresponds to 380–729 (GVDAQTHTVG…WEWVVLLFLL (350 aa)). An HVR1 region spans residues 385–411 (THTVGGSTAHNARTLTGMFSLGARQKI). N-linked (GlcNAc...) (high mannose) asparagine; by host glycosylation is found at N417, N423, N430, and N448. Cystine bridges form between C429–C554, C452–C459, C488–C496, and C505–C510. N477 carries an N-linked (GlcNAc...) (high mannose) asparagine; by host glycan. A CD81-binding 1 region spans residues 484–496 (MRPYCWHYPPRQC). The tract at residues 524–555 (LGAPTYTWGENETDVFLLNSTRPPQGSWFGCT) is CD81-binding 2. 3 N-linked (GlcNAc...) (high mannose) asparagine; by host glycosylation sites follow: N534, N542, and N558. C566 and C571 are oxidised to a cystine. N578 carries an N-linked (GlcNAc...) (high mannose) asparagine; by host glycan. Intrachain disulfides connect C585-C589, C601-C624, and C611-C648. N-linked (GlcNAc...) (high mannose) asparagine; by host glycans are attached at residues N627 and N649. A disulfide bond links C656 and C681. The interval 664 to 675 (SQLSPLLHSTTE) is EIF2AK2/eIF2-alpha phosphorylation homology domain (PePHD). The helical transmembrane segment at 730–750 (LADARVCACLWMLILLGQAEA) threads the bilayer. Topologically, residues 751–761 (ALEKLVVLHAA) are lumenal. The helical transmembrane segment at 762 to 782 (SAASCNGFLYFVIFFVAAWYI) threads the bilayer. Residues 783 to 786 (KGRV) lie on the Cytoplasmic side of the membrane. A helical membrane pass occupies residues 787-807 (VPLATYSLTGLWSFGLLLLAL). Over 808-817 (PQQAYAYDAS) the chain is Lumenal. Residues 818–838 (VHGQIGAALLVLITLFTLTPG) traverse the membrane as a helical segment. At 839–885 (YKTLLSRFLWWLCYLLTLAEAMVQEWAPPMQVRGGRDGIIWAVAIFC) the chain is on the cytoplasmic side. A helical membrane pass occupies residues 886 to 906 (PGVVFDITKWLLAVLGPAYLL). Topologically, residues 907–932 (KGALTRVPYFVRAHALLRMCTMVRHL) are lumenal. The Peptidase C18 domain occupies 907 to 1030 (KGALTRVPYF…GYTSKGWSLL (124 aa)). Residues 908–1210 (GALTRVPYFV…PVETLDIVTR (303 aa)) are protease NS2-3. The S-palmitoyl cysteine; by host moiety is linked to residue C926. The helical transmembrane segment at 933–953 (AGGRYVQMVLLALGRWTGTYI) threads the bilayer. Residues 933 to 953 (AGGRYVQMVLLALGRWTGTYI) are interaction with host SCPS1. At 954-1661 (YDHLTPMSDW…CMQADLEVMT (708 aa)) the chain is on the cytoplasmic side. Active-site for protease NS2 activity; shared with dimeric partner residues include H956, E976, and C997. The 182-residue stretch at 1031–1212 (APITAYAQQT…ETLDIVTRSP (182 aa)) folds into the Peptidase S29 domain. Residues H1087 and D1111 each act as charge relay system; for serine protease NS3 activity in the active site. Positions 1127 and 1129 each coordinate Zn(2+). The Charge relay system; for serine protease NS3 activity role is filled by S1169. C1175 and H1179 together coordinate Zn(2+). The region spanning 1221-1373 (PAVPQTYQVG…PNIEEVALGQ (153 aa)) is the Helicase ATP-binding domain. 1234-1241 (APTGSGKS) provides a ligand contact to ATP. Mg(2+)-binding residues include S1241 and E1321. The short motif at 1320 to 1323 (DECH) is the DECH box element. An RNA-binding region spans residues 1490–1501 (QRRGRTGRGRLG). Residues 1662–1682 (STWVLAGGVLAAVAAYCLATG) form a helical membrane-spanning segment. The tract at residues 1683 to 1694 (CVCIIGRLHVNQ) is NS3-binding. Topologically, residues 1683-1809 (CVCIIGRLHV…ALTSPLSTST (127 aa)) are cytoplasmic. A helical transmembrane segment spans residues 1810 to 1830 (TILLNILGGWLASQIAPPAGA). The Lumenal portion of the chain corresponds to 1831–1832 (TG). A helical membrane pass occupies residues 1833–1853 (FVVSGLVGAAVGSIGLGKVLV). A glycine zipper region spans residues 1837–1865 (GLVGAAVGSIGLGKVLVDILAGYGAGISG). Position 1854 (D1854) is a topological domain, cytoplasmic. The helical transmembrane segment at 1855–1875 (ILAGYGAGISGALVAFKIMSG) threads the bilayer. The Lumenal segment spans residues 1876 to 1885 (EKPSMEDVVN). The helical transmembrane segment at 1886-1906 (LLPGILSPGALVVGVICAAIL) threads the bilayer. The Cytoplasmic portion of the chain corresponds to 1907–1976 (RRHVGPGEGA…WITEDCPIPC (70 aa)). C1972 is lipidated: S-palmitoyl cysteine; by host. A lipid anchor (S-palmitoyl cysteine; by host; partial) is attached at C1976. The stretch at 1977 to 2007 (SGSWLRDVWDWVCTILTDFKNWLTSKLFPKM) is an intramembrane region. A membrane-binding region spans residues 1982–2002 (RDVWDWVCTILTDFKNWLTSK). The Cytoplasmic portion of the chain corresponds to 2008–3012 (PGLPFISCQK…YHSVSRARPR (1005 aa)). Residues 2009 to 2225 (GLPFISCQKG…RATCTTHGKA (217 aa)) form an RNA-binding region. Positions 2015, 2033, 2035, and 2056 each coordinate Zn(2+). Residue Y2069 is modified to Phosphotyrosine; by host. The segment at 2124-2212 (EFFSWVDGVQ…ASSSASQLSA (89 aa)) is FKBP8-binding. The segment at 2124–2332 (EFFSWVDGVQ…PTPPPRRRRT (209 aa)) is transcriptional activation. The tract at residues 2139–2143 (PIPKP) is interaction with non-structural protein 4A. 2 disordered regions span residues 2193-2214 (RLARGSPPSEASSSASQLSAPS) and 2309-2335 (ATVAGCALPPPKKTPTPPPRRRRTVGL). S2198 carries the phosphoserine; by host; in p56 modification. Residues 2198–2214 (SPPSEASSSASQLSAPS) show a composition bias toward low complexity. S2201 is subject to Phosphoserine; by host; in p58. S2205 carries the post-translational modification Phosphoserine; by host; in p56 and p58, regulates intracellular NS5A distribution. Phosphoserine; by host; in p58 occurs at positions 2208, 2211, and 2214. Residues 2210–2249 (LSAPSLRATCTTHGKAYDVDMVDANLFMGGDVTRIESESK) form an ISDR region. Positions 2214–2275 (SLRATCTTHG…LEPSIPSEYM (62 aa)) are interaction with EIF2AK2/PKR. An NS4B-binding region spans residues 2253-2310 (LDSLDPMVEERSDLEPSIPSEYMLPKKRFPPALPAWARPDYNPPLVESWKRPDYQPAT). Pro residues predominate over residues 2316–2326 (LPPPKKTPTPP). The SH3-binding motif lies at 2322 to 2325 (TPTP). T2324 carries the phosphothreonine; by host modification. The Nuclear localization signal motif lies at 2326–2334 (PPRRRRTVG). An interaction with host IFI27 region spans residues 2336–2447 (SESSIADALQ…SVVCCSMSYS (112 aa)). A Glycyl lysine isopeptide (Lys-Gly) (interchain with G-Cter in ubiquitin) cross-link involves residue K2350. The segment at 2351–2431 (SFGQPPPSGD…PGSGSGSWST (81 aa)) is disordered. Positions 2358–2381 (SGDSGLSTGADAADSGSRTPPDEL) are V3. Over residues 2398 to 2408 (EPGDPDLEPEQ) the composition is skewed to acidic residues. The segment covering 2417-2431 (GGVVTPGSGSGSWST) has biased composition (low complexity). A RdRp catalytic domain is found at 2656-2774 (PMGFSYDTRC…ISESQGTEED (119 aa)). Mg(2+)-binding residues include D2662, D2760, and D2761. Residues 3013 to 3033 (LLLLGLLLLFVGVGLFLLPAR) traverse the membrane as a helical segment.

This sequence belongs to the hepacivirus polyprotein family. In terms of assembly, homooligomer. Interacts with E1 (via C-terminus). Interacts with the non-structural protein 5A. Interacts (via N-terminus) with host STAT1 (via SH2 domain); this interaction results in decreased STAT1 phosphorylation and ubiquitin-mediated proteasome-dependent STAT1 degradation, leading to decreased IFN-stimulated gene transcription. Interacts with host STAT3; this interaction constitutively activates STAT3. Interacts with host LTBR receptor. Interacts with host TNFRSF1A receptor and possibly induces apoptosis. Interacts with host HNRPK. Interacts with host YWHAE. Interacts with host UBE3A/E6AP. Interacts with host DDX3X. Interacts with host APOA2. Interacts with host RXRA protein. Interacts with host SP110 isoform 3/Sp110b; this interaction sequesters the transcriptional corepressor SP110 away from the nucleus. Interacts with host CREB3 nuclear transcription protein; this interaction triggers cell transformation. Interacts with host ACY3. Interacts with host C1QR1. Interacts with host RBM24; this interaction, which enhances the interaction of the mature core protein with 5'-UTR, may inhibit viral translation and favor replication. Interacts with host EIF2AK2/PKR; this interaction induces the autophosphorylation of EIF2AK2. Part of the viral assembly initiation complex composed of NS2, E1, E2, NS3, NS4A, NS5A and the mature core protein. As to quaternary structure, forms a heterodimer with envelope glycoprotein E2. Interacts with mature core protein. Interacts with protease NS2. The heterodimer E1/E2 interacts with host CLDN1; this interaction plays a role in viral entry into host cell. Interacts with host SPSB2 (via C-terminus). Part of the viral assembly initiation complex composed of NS2, E1, E2, NS3, NS4A, NS5A and the mature core protein. Interacts with host NEURL3; this interaction prevents E1 binding to glycoprotein E2. Forms a heterodimer with envelope glycoprotein E1. Interacts with host CD81 and SCARB1 receptors; this interaction may play a role in viral entry into host cell. Interacts with host EIF2AK2/PKR; this interaction inhibits EIF2AK2 and probably allows the virus to evade the innate immune response. Interacts with host CD209/DC-SIGN and CLEC4M/DC-SIGNR. Interact with host SPCS1; this interaction is essential for viral particle assembly. Interacts with protease NS2. The heterodimer E1/E2 interacts with host CLDN1; this interaction plays a role in viral entry into host cell. Part of the viral assembly initiation complex composed of NS2, E1, E2, NS3, NS4A, NS5A and the mature core protein. Interacts with host SLC3A2/4F2hc; the interaction may facilitate viral entry into host cell. Interacts with human PLSCR1. In terms of assembly, homohexamer. Homoheptamer. Interacts with protease NS2. As to quaternary structure, homodimer. Interacts with host SPCS1; this interaction is essential for viral particle assembly. Interacts with envelope glycoprotein E1. Interacts with envelope glycoprotein E2. Interacts with viroporin p7. Interacts with serine protease/helicase NS3. Part of the replication complex composed of NS2, NS3, NS4A, NS4B, NS5A and the RNA-directed RNA polymerase embedded in an ER-derived membranous web. Part of the viral assembly initiation complex composed of NS2, E1, E2, NS3, NS4A, NS5A and the mature core protein. Interacts with protease NS2. Interacts with non-structural protein 4A; this interaction stabilizes the folding of NS3 serine protease. NS3-NS4A interaction is essential for NS3 activation and allows membrane anchorage of the latter. NS3/NS4A complex also prevents phosphorylation of host IRF3, thus preventing the establishment of dsRNA induced antiviral state. Interacts with host MAVS; this interaction leads to the cleavage and inhibition of host MAVS. Interacts with host TICAM1; this interaction leads to the cleavage and inhibition of host TICAM1. Interacts with host TANK-binding kinase/TBK1; this interaction results in the inhibition of the association between TBK1 and IRF3, which leads to the inhibition of IRF3 activation. Interacts with host RBM24. Part of the replication complex composed of NS2, NS3, NS4A, NS4B, NS5A and the RNA-directed RNA polymerase embedded in an ER-derived membranous web. Part of the viral assembly initiation complex composed of NS2, E1, E2, NS3, NS4A, NS5A and the mature core protein. In terms of assembly, interacts with NS3 serine protease; this interaction stabilizes the folding of NS3 serine protease. NS3-NS4A interaction is essential for NS3 activation and allows membrane anchorage of the latter. Interacts with non-structural protein 5A (via N-terminus). Part of the replication complex composed of NS2, NS3, NS4A, NS4B, NS5A and the RNA-directed RNA polymerase embedded in an ER-derived membranous web. Part of the viral assembly initiation complex composed of NS2, E1, E2, NS3, NS4A, NS5A and the mature core protein. As to quaternary structure, homomultimer. Interacts with non-structural protein NS5A. Interacts with host PLA2G4C; this interaction likely initiates the recruitment of replication complexes to lipid droplets. Interacts with host STING; this interaction disrupts the interaction between STING and TBK1 thereby suppressing the interferon signaling. Part of the replication complex composed of NS2, NS3, NS4A, NS4B, NS5A and the RNA-directed RNA polymerase embedded in an ER-derived membranous web. Monomer. Homodimer; dimerization is required for RNA-binding. Interacts with the mature core protein. Interacts (via N-terminus) with non-structural protein 4A. Interacts with non-structural protein 4B. Interacts (via region D2) with RNA-directed RNA polymerase. Part of the viral assembly initiation complex composed of NS2, E1, E2, NS3, NS4A, NS5A and the mature core protein. Part of the replication complex composed of NS2, NS3, NS4A, NS4B, NS5A and the RNA-directed RNA polymerase embedded in an ER-derived membranous web. Interacts with host GRB2. Interacts with host BIN1. Interacts with host PIK3R1. Interacts with host SRCAP. Interacts with host FKBP8. Interacts (via C-terminus) with host VAPB (via MSP domain). Interacts with host EIF2AK2/PKR; this interaction leads to disruption of EIF2AK2 dimerization by NS5A and probably allows the virus to evade the innate immune response. Interacts (via N-terminus) with host PACSIN2 (via N-terminus); this interaction attenuates protein kinase C alpha-mediated phosphorylation of PACSIN2 by disrupting the interaction between PACSIN2 and PRKCA. Interacts (via N-terminus) with host SRC kinase (via SH2 domain). Interacts with most Src-family kinases. Interacts with host IFI27 and SKP2; promotes the ubiquitin-mediated proteasomal degradation of NS5A. Interacts with host GPS2. Interacts with host TNFRSF21; this interaction allows the modulation by the virus of JNK, p38 MAPK, STAT3, and Akt signaling pathways in a DR6-dependent manner. Interacts (via N-terminus) with host CIDEB (via N-terminus); this interaction seems to regulate the association of HCV particles with APOE. Interacts with host CHKA/Choline Kinase-alpha; CHKA bridges host PI4KA and NS5A and potentiates NS5A-stimulated PI4KA activity, which then facilitates the targeting of the ternary complex to the ER for viral replication. Interacts with host SPSB2 (via C-terminus); this interaction targets NS5A for ubiquitination and degradation. Interacts with host RAB18; this interaction may promote the association of NS5A and other replicase components with lipid droplets. Interacts (via region D2) with host PPIA/CYPA; the interaction stimulates RNA-binding ability of NS5A and is dependent on the peptidyl-prolyl cis-trans isomerase activity of PPIA/CYPA. Interacts with host TRIM14; this interaction induces the degradation of NS5A. In terms of assembly, homooligomer. Interacts with non-structural protein 5A. Interacts with host VAPB. Interacts with host PRK2/PKN2. Interacts with host HNRNPA1 and SEPT6; these interactions facilitate viral replication. Part of the replication complex composed of NS2, NS3, NS4A, NS4B, NS5A and the RNA-directed RNA polymerase. Zn(2+) is required as a cofactor. It depends on Mg(2+) as a cofactor. Post-translationally, specific enzymatic cleavages in vivo yield mature proteins. The structural proteins, core, E1, E2 and p7 are produced by proteolytic processing by host signal peptidases. The core protein precursor is synthesized as a 23 kDa, which is retained in the ER membrane through the hydrophobic signal peptide. Cleavage by the signal peptidase releases the 21 kDa mature core protein. The cleavage of the core protein precursor occurs between aminoacids 176 and 188 but the exact cleavage site is not known. Some degraded forms of the core protein appear as well during the course of infection. The other proteins (p7, NS2, NS3, NS4A, NS4B, NS5A and NS5B) are cleaved by the viral proteases. Autoprocessing between NS2 and NS3 is mediated by the NS2 cysteine protease catalytic domain and regulated by the NS3 N-terminal domain. Phosphorylated by host PKC and PKA. In terms of processing, ubiquitinated; mediated by UBE3A and leading to core protein subsequent proteasomal degradation. Post-translationally, highly N-glycosylated. Palmitoylation is required for NS2/3 autoprocessing and E2 recruitment to membranes. In terms of processing, palmitoylated. This modification may play a role in its polymerization or in protein-protein interactions. Post-translationally, phosphorylated on serines in a basal form termed p56. p58 is a hyperphosphorylated form of p56. p56 and p58 coexist in the cell in roughly equivalent amounts. Hyperphosphorylation is dependent on the presence of NS4A. Host CSNK1A1/CKI-alpha or RPS6KB1 kinases may be responsible for NS5A phosphorylation. Tyrosine phosphorylation is essential for the interaction with host SRC. In terms of processing, the N-terminus is phosphorylated by host PRK2/PKN2.

The protein resides in the host endoplasmic reticulum membrane. Its subcellular location is the host mitochondrion membrane. It localises to the virion. It is found in the host cytoplasm. The protein localises to the host nucleus. The protein resides in the host lipid droplet. Its subcellular location is the virion membrane. It localises to the host mitochondrion. It is found in the host cell membrane. The protein localises to the host perinuclear region. The catalysed reaction is Hydrolysis of four peptide bonds in the viral precursor polyprotein, commonly with Asp or Glu in the P6 position, Cys or Thr in P1 and Ser or Ala in P1'.. It carries out the reaction a ribonucleoside 5'-triphosphate + H2O = a ribonucleoside 5'-diphosphate + phosphate + H(+). It catalyses the reaction ATP + H2O = ADP + phosphate + H(+). The enzyme catalyses RNA(n) + a ribonucleoside 5'-triphosphate = RNA(n+1) + diphosphate. With respect to regulation, inhibited by the antiviral drug hexamethylene amiloride. Inhibition by amantadine appears to be genotype-dependent. Also inhibited by long-alkyl-chain iminosugar derivatives. Its activity is regulated as follows. Activity is up-regulated by PRK2/PKN2-mediated phosphorylation. Functionally, packages viral RNA to form a viral nucleocapsid, and promotes virion budding. Participates in the viral particle production as a result of its interaction with the non-structural protein 5A. Binds RNA and may function as a RNA chaperone to induce the RNA structural rearrangements taking place during virus replication. Modulates viral translation initiation by interacting with viral IRES and 40S ribosomal subunit. Affects various cell signaling pathways, host immunity and lipid metabolism. Prevents the establishment of cellular antiviral state by blocking the interferon-alpha/beta (IFN-alpha/beta) and IFN-gamma signaling pathways and by blocking the formation of phosphorylated STAT1 and promoting ubiquitin-mediated proteasome-dependent degradation of STAT1. Activates STAT3 leading to cellular transformation. Regulates the activity of cellular genes, including c-myc and c-fos. May repress the promoter of p53, and sequester CREB3 and SP110 isoform 3/Sp110b in the cytoplasm. Represses cell cycle negative regulating factor CDKN1A, thereby interrupting an important check point of normal cell cycle regulation. Targets transcription factors involved in the regulation of inflammatory responses and in the immune response: suppresses TNF-induced NF-kappa-B activation, and activates AP-1. Binds to dendritic cells (DCs) via C1QR1, resulting in down-regulation of T-lymphocytes proliferation. Alters lipid metabolism by interacting with hepatocellular proteins involved in lipid accumulation and storage. Induces up-regulation of FAS promoter activity, and thereby contributes to the increased triglyceride accumulation in hepatocytes (steatosis). In terms of biological role, forms a heterodimer with envelope glycoprotein E2, which mediates virus attachment to the host cell, virion internalization through clathrin-dependent endocytosis and fusion with host membrane. Fusion with the host cell is most likely mediated by both E1 and E2, through conformational rearrangements of the heterodimer required for fusion rather than a classical class II fusion mechanism. E1/E2 heterodimer binds host apolipoproteins such as APOB and APOE thereby forming a lipo-viro-particle (LVP). APOE associated to the LVP allows the initial virus attachment to cell surface receptors such as the heparan sulfate proteoglycans (HSPGs), syndecan-1 (SDC1), syndecan-1 (SDC2), the low-density lipoprotein receptor (LDLR) and scavenger receptor class B type I (SCARB1). The cholesterol transfer activity of SCARB1 allows E2 exposure and binding of E2 to SCARB1 and the tetraspanin CD81. E1/E2 heterodimer binding on CD81 activates the epithelial growth factor receptor (EGFR) signaling pathway. Diffusion of the complex E1-E2-EGFR-SCARB1-CD81 to the cell lateral membrane allows further interaction with Claudin 1 (CLDN1) and occludin (OCLN) to finally trigger HCV entry. Forms a heterodimer with envelope glycoprotein E1, which mediates virus attachment to the host cell, virion internalization through clathrin-dependent endocytosis and fusion with host membrane. Fusion with the host cell is most likely mediated by both E1 and E2, through conformational rearrangements of the heterodimer required for fusion rather than a classical class II fusion mechanism. The interaction between envelope glycoprotein E2 and host apolipoprotein E/APOE allows the proper assembly, maturation and infectivity of the viral particles. This interaction is probably promoted via the up-regulation of cellular autophagy by the virus. E1/E2 heterodimer binds host apolipoproteins such as APOB and APOE thereby forming a lipo-viro-particle (LVP). APOE associated to the LVP allows the initial virus attachment to cell surface receptors such as the heparan sulfate proteoglycans (HSPGs), syndecan-1 (SDC1), syndecan-1 (SDC2), the low-density lipoprotein receptor (LDLR) and scavenger receptor class B type I (SCARB1). The cholesterol transfer activity of SCARB1 allows E2 exposure and binding of E2 to SCARB1 and the tetraspanin CD81. E1/E2 heterodimer binding on CD81 activates the epithelial growth factor receptor (EGFR) signaling pathway. Diffusion of the complex E1-E2-EGFR-SCARB1-CD81 to the cell lateral membrane allows further interaction with Claudin 1 (CLDN1) and occludin (OCLN) to finally trigger HCV entry. Inhibits host EIF2AK2/PKR activation, preventing the establishment of an antiviral state. Viral ligand for CD209/DC-SIGN and CLEC4M/DC-SIGNR, which are respectively found on dendritic cells (DCs), and on liver sinusoidal endothelial cells and macrophage-like cells of lymph node sinuses. These interactions allow the capture of circulating HCV particles by these cells and subsequent facilitated transmission to permissive cells such as hepatocytes and lymphocyte subpopulations. The interaction between E2 and host amino acid transporter complex formed by SLC3A2 and SLC7A5/LAT1 may facilitate viral entry into host cell. Its function is as follows. Ion channel protein that acts as a viroporin and plays an essential role in the assembly, envelopment and secretion of viral particles. Regulates the host cell secretory pathway, which induces the intracellular retention of viral glycoproteins and favors assembly of viral particles. Creates a pore in acidic organelles and releases Ca(2+) and H(+) in the cytoplasm of infected cells, leading to a productive viral infection. High levels of cytoplasmic Ca(2+) may trigger membrane trafficking and transport of viral ER-associated proteins to viroplasms, sites of viral genome replication. This ionic imbalance induces the assembly of the inflammasome complex, which triggers the maturation of pro-IL-1beta into IL-1beta through the action of caspase-1. Targets also host mitochondria and induces mitochondrial depolarization. In addition of its role as a viroporin, acts as a lipid raft adhesion factor. Functionally, cysteine protease required for the proteolytic auto-cleavage between the non-structural proteins NS2 and NS3. The N-terminus of NS3 is required for the function of NS2 protease (active region NS2-3). Promotes the initiation of viral particle assembly by mediating the interaction between structural and non-structural proteins. In terms of biological role, displays three enzymatic activities: serine protease with a chymotrypsin-like fold, NTPase and RNA helicase. NS3 serine protease, in association with NS4A, is responsible for the cleavages of NS3-NS4A, NS4A-NS4B, NS4B-NS5A and NS5A-NS5B. The NS3/NS4A complex prevents phosphorylation of host IRF3, thus preventing the establishment of dsRNA induced antiviral state. The NS3/NS4A complex induces host amino acid transporter component SLC3A2, thus contributing to HCV propagation. NS3 RNA helicase binds to RNA and unwinds both dsDNA and dsRNA in the 3' to 5' direction, and likely resolves RNA complicated stable secondary structures in the template strand. Binds a single ATP and catalyzes the unzipping of a single base pair of dsRNA. Inhibits host antiviral proteins TBK1 and IRF3 thereby preventing the establishment of an antiviral state. Cleaves host MAVS/CARDIF thereby preventing the establishment of an antiviral state. Cleaves host TICAM1/TRIF, thereby disrupting TLR3 signaling and preventing the establishment of an antiviral state. Induces a specific membrane alteration that serves as a scaffold for the virus replication complex. This membrane alteration gives rise to the so-called ER-derived membranous web that contains the replication complex. NS4B self-interaction contributes to its function in membranous web formation. Promotes host TRIF protein degradation in a CASP8-dependent manner thereby inhibiting host TLR3-mediated interferon signaling. Disrupts the interaction between STING and TBK1 contributing to the inhibition of interferon signaling. Its function is as follows. Phosphorylated protein that is indispensable for viral replication and assembly. Both hypo- and hyperphosphorylated states are required for the viral life cycle. The hyperphosphorylated form of NS5A is an inhibitor of viral replication. Involved in RNA-binding and especially in binding to the viral genome. Zinc is essential for RNA-binding. Participates in the viral particle production as a result of its interaction with the mature viral core protein. Its interaction with host VAPB may target the viral replication complex to vesicles. Down-regulates viral IRES translation initiation. Mediates interferon resistance, presumably by interacting with and inhibiting host EIF2AK2/PKR. Prevents BIN1-induced apoptosis. Acts as a transcriptional activator of some host genes important for viral replication when localized in the nucleus. Via the interaction with host PACSIN2, modulates lipid droplet formation in order to promote virion assembly. Modulates TNFRSF21/DR6 signaling pathway for viral propagation. Functionally, RNA-dependent RNA polymerase that performs primer-template recognition and RNA synthesis during viral replication. Initiates RNA transcription/replication at a flavin adenine dinucleotide (FAD), resulting in a 5'- FAD cap on viral RNAs. In this way, recognition of viral 5' RNA by host pattern recognition receptors can be bypassed, thereby evading activation of antiviral pathways. This chain is Genome polyprotein, found in Homo sapiens (Human).